Here is a 279-residue protein sequence, read N- to C-terminus: Ribosomal RNA small subunit methyltransferase A (279 aa).

Positions 28, 30, 55, 77, 103, and 122 each coordinate S-adenosyl-L-methionine.

The protein belongs to the class I-like SAM-binding methyltransferase superfamily. rRNA adenine N(6)-methyltransferase family. RsmA subfamily.

It is found in the cytoplasm. It catalyses the reaction adenosine(1518)/adenosine(1519) in 16S rRNA + 4 S-adenosyl-L-methionine = N(6)-dimethyladenosine(1518)/N(6)-dimethyladenosine(1519) in 16S rRNA + 4 S-adenosyl-L-homocysteine + 4 H(+). In terms of biological role, specifically dimethylates two adjacent adenosines (A1518 and A1519) in the loop of a conserved hairpin near the 3'-end of 16S rRNA in the 30S particle. May play a critical role in biogenesis of 30S subunits. This is Ribosomal RNA small subunit methyltransferase A from Ruegeria pomeroyi (strain ATCC 700808 / DSM 15171 / DSS-3) (Silicibacter pomeroyi).